The chain runs to 116 residues: Aspartate 1-decarboxylase (116 aa).

The active-site Schiff-base intermediate with substrate; via pyruvic acid is the Ser25. Ser25 carries the pyruvic acid (Ser) modification. Thr57 contributes to the substrate binding site. Tyr58 acts as the Proton donor in catalysis. A substrate-binding site is contributed by 73 to 75 (GAA).

It belongs to the PanD family. In terms of assembly, heterooctamer of four alpha and four beta subunits. Pyruvate serves as cofactor. In terms of processing, is synthesized initially as an inactive proenzyme, which is activated by self-cleavage at a specific serine bond to produce a beta-subunit with a hydroxyl group at its C-terminus and an alpha-subunit with a pyruvoyl group at its N-terminus.

The protein localises to the cytoplasm. It carries out the reaction L-aspartate + H(+) = beta-alanine + CO2. It participates in cofactor biosynthesis; (R)-pantothenate biosynthesis; beta-alanine from L-aspartate: step 1/1. Its function is as follows. Catalyzes the pyruvoyl-dependent decarboxylation of aspartate to produce beta-alanine. The polypeptide is Aspartate 1-decarboxylase (Syntrophus aciditrophicus (strain SB)).